A 272-amino-acid polypeptide reads, in one-letter code: Orotidine 5'-phosphate decarboxylase (272 aa).

The Proton donor role is filled by Lys96.

This sequence belongs to the OMP decarboxylase family. Type 2 subfamily.

It carries out the reaction orotidine 5'-phosphate + H(+) = UMP + CO2. The protein operates within pyrimidine metabolism; UMP biosynthesis via de novo pathway; UMP from orotate: step 2/2. The sequence is that of Orotidine 5'-phosphate decarboxylase from Phocaeicola vulgatus (strain ATCC 8482 / DSM 1447 / JCM 5826 / CCUG 4940 / NBRC 14291 / NCTC 11154) (Bacteroides vulgatus).